The sequence spans 269 residues: Eukaryotic translation initiation factor 3 subunit G-1 (269 aa).

The RRM domain maps to 188 to 266 (AAIRISNLSE…LILSVEWSKP (79 aa)).

The protein belongs to the eIF-3 subunit G family. As to quaternary structure, component of the eukaryotic translation initiation factor 3 (eIF-3) complex. The eIF-3 complex interacts with pix.

Its subcellular location is the cytoplasm. In terms of biological role, RNA-binding component of the eukaryotic translation initiation factor 3 (eIF-3) complex, which is involved in protein synthesis of a specialized repertoire of mRNAs and, together with other initiation factors, stimulates binding of mRNA and methionyl-tRNAi to the 40S ribosome. The eIF-3 complex specifically targets and initiates translation of a subset of mRNAs involved in cell proliferation. This subunit can bind 18S rRNA. The polypeptide is Eukaryotic translation initiation factor 3 subunit G-1 (Drosophila persimilis (Fruit fly)).